We begin with the raw amino-acid sequence, 103 residues long: MTKTIKVKKSALIDIIKYPILTDKTTQMIEENKYSFAVEVKAKKPKIKEAIEQLFDVKVQQINTLIVKPQKKRVGKYIGYKSKYKKAVIKLYDPYKINLFADN.

This sequence belongs to the universal ribosomal protein uL23 family. As to quaternary structure, part of the 50S ribosomal subunit.

The protein localises to the plastid. It localises to the chloroplast. Functionally, binds to 23S rRNA. The protein is Large ribosomal subunit protein uL23c (rpl23) of Gracilaria tenuistipitata var. liui (Red alga).